We begin with the raw amino-acid sequence, 448 residues long: Trigger factor (448 aa).

The PPIase FKBP-type domain occupies Gly-172–Pro-257.

This sequence belongs to the FKBP-type PPIase family. Tig subfamily.

It is found in the cytoplasm. The catalysed reaction is [protein]-peptidylproline (omega=180) = [protein]-peptidylproline (omega=0). Its function is as follows. Involved in protein export. Acts as a chaperone by maintaining the newly synthesized protein in an open conformation. Functions as a peptidyl-prolyl cis-trans isomerase. The polypeptide is Trigger factor (Paraburkholderia phymatum (strain DSM 17167 / CIP 108236 / LMG 21445 / STM815) (Burkholderia phymatum)).